We begin with the raw amino-acid sequence, 202 residues long: MTSIRIFIKFYGGTMRKFLIFLIFLSVLGCGITISGCIGGKNVEEIQNMQEQVVQQQQNENQEEYQNEDEGVDYNSIRDVQPIGTAKEADEKIRPILNEVFGEVKLMEYVSTGKQNEGESIVLTYVPKRKITTNDFEKLNEAIKKSGYFESSGGIAGGGQSGEGMVLWYVSKDNKSAIQIILYPDTNEIVVGYYKGKIYSSQ.

The helical transmembrane segment at 18-38 (FLIFLIFLSVLGCGITISGCI) threads the bilayer.

It localises to the membrane. This is an uncharacterized protein from Methanocaldococcus jannaschii (strain ATCC 43067 / DSM 2661 / JAL-1 / JCM 10045 / NBRC 100440) (Methanococcus jannaschii).